Here is a 279-residue protein sequence, read N- to C-terminus: Putative expansin-A26 (279 aa).

Residues 1 to 27 (MKLLEKMIYVEFLMIIMAMWVVPMSYG) form the signal peptide. In terms of domain architecture, Expansin-like EG45 spans 76-186 (QGACGYGNLF…RRIPCSKTGG (111 aa)). The region spanning 196-275 (YFLMVLIYNV…NWGFGQTFDG (80 aa)) is the Expansin-like CBD domain.

Belongs to the expansin family. Expansin A subfamily.

It localises to the secreted. The protein resides in the cell wall. The protein localises to the membrane. In terms of biological role, causes loosening and extension of plant cell walls by disrupting non-covalent bonding between cellulose microfibrils and matrix glucans. No enzymatic activity has been found. The polypeptide is Putative expansin-A26 (EXPA26) (Arabidopsis thaliana (Mouse-ear cress)).